We begin with the raw amino-acid sequence, 223 residues long: Neurotrophic factor BDNF precursor form (223 aa).

The signal sequence occupies residues 1-5 (SCMKA). A propeptide spanning residues 6–114 (APMKEVSIRG…AANMSMRVRR (109 aa)) is cleaved from the precursor. N-linked (GlcNAc...) asparagine glycosylation occurs at asparagine 107. Intrachain disulfides connect cysteine 127-cysteine 194 and cysteine 172-cysteine 223.

Belongs to the NGF-beta family.

The protein localises to the secreted. Its function is as follows. Promotes the survival of neuronal populations that are all located either in the central nervous system or directly connected to it. The protein is Neurotrophic factor BDNF precursor form (BDNF) of Aspidites melanocephalus (Black-headed python).